We begin with the raw amino-acid sequence, 786 residues long: LPS-assembly protein LptD (786 aa).

An N-terminal signal peptide occupies residues M1 to A24. 2 disulfides stabilise this stretch: C31–C726 and C173–C727.

This sequence belongs to the LptD family. Component of the lipopolysaccharide transport and assembly complex. Interacts with LptE and LptA. In terms of processing, contains two intramolecular disulfide bonds.

It localises to the cell outer membrane. Functionally, together with LptE, is involved in the assembly of lipopolysaccharide (LPS) at the surface of the outer membrane. The chain is LPS-assembly protein LptD from Salmonella typhimurium (strain LT2 / SGSC1412 / ATCC 700720).